A 718-amino-acid polypeptide reads, in one-letter code: Sec-independent protein translocase protein TatCt (718 aa).

The next 8 membrane-spanning stretches (helical) occupy residues 34-54 (VFIV…LYVW), 84-104 (ILLQ…PPFI), 137-157 (LFAA…FAFL), 178-198 (FIFL…AMTG), 214-231 (WRHA…FTPP), 234-254 (FTQI…LYLA), 280-300 (LAGV…YGGV), and 325-345 (LGAF…AYLV). The disordered stretch occupies residues 421–451 (REAEAADAEDEPGELEDRTTRAGGAFVSELT). Acidic residues predominate over residues 425–434 (AADAEDEPGE). The next 6 membrane-spanning stretches (helical) occupy residues 478-498 (AFWV…WLYT), 539-559 (FSTI…VWPA), 572-592 (TVFV…ALGY), 621-641 (FFWL…VPIL), 661-681 (EVTV…ITTM), and 682-702 (FMVT…LFVL).

The protein belongs to the TatC family. As to quaternary structure, forms a complex with TatA.

The protein localises to the cell membrane. In terms of biological role, part of the twin-arginine translocation (Tat) system that transports large folded proteins containing a characteristic twin-arginine motif in their signal peptide across membranes. The protein is Sec-independent protein translocase protein TatCt of Haloferax volcanii (strain ATCC 29605 / DSM 3757 / JCM 8879 / NBRC 14742 / NCIMB 2012 / VKM B-1768 / DS2) (Halobacterium volcanii).